Here is a 469-residue protein sequence, read N- to C-terminus: Arginine biosynthesis bifunctional protein ArgJ, mitochondrial (469 aa).

Substrate is bound by residues T199, K228, T239, E325, N464, and T469. T239 (nucleophile) is an active-site residue.

It belongs to the ArgJ family. As to quaternary structure, heterodimer of an alpha and a beta chain. In terms of processing, the alpha and beta chains are autoproteolytically processed from a single precursor protein within the mitochondrion.

It is found in the mitochondrion matrix. The catalysed reaction is N(2)-acetyl-L-ornithine + L-glutamate = N-acetyl-L-glutamate + L-ornithine. It carries out the reaction L-glutamate + acetyl-CoA = N-acetyl-L-glutamate + CoA + H(+). It functions in the pathway amino-acid biosynthesis; L-arginine biosynthesis; L-ornithine and N-acetyl-L-glutamate from L-glutamate and N(2)-acetyl-L-ornithine (cyclic): step 1/1. The protein operates within amino-acid biosynthesis; L-arginine biosynthesis; N(2)-acetyl-L-ornithine from L-glutamate: step 1/4. Catalyzes two activities which are involved in the cyclic version of arginine biosynthesis: the synthesis of acetylglutamate from glutamate and acetyl-CoA, and of ornithine by transacetylation between acetylornithine and glutamate. This is Arginine biosynthesis bifunctional protein ArgJ, mitochondrial from Sordaria macrospora (strain ATCC MYA-333 / DSM 997 / K(L3346) / K-hell).